A 680-amino-acid polypeptide reads, in one-letter code: NADPH--cytochrome P450 reductase (680 aa).

Topologically, residues 1–5 are lumenal; the sequence is MALDK. Residues 6–23 traverse the membrane as a helical segment; sequence LDLYVIITLVVAIAAYFA. At 24–680 the chain is on the cytoplasmic side; that stretch reads KNQFLDQQQD…VQNRYQEDVW (657 aa). A Flavodoxin-like domain is found at 60–204; it reads TLLLFGSQTG…DFLAWKDNVF (145 aa). Residues 66–71, 117–120, 152–161, and aspartate 187 each bind FMN; these read SQTGTA, ATYG, and LGNSTYEFFN. An FAD-binding FR-type domain is found at 264-509; the sequence is THPFLARIVK…NGPRGKFSKF (246 aa). Arginine 283 provides a ligand contact to NADP(+). Residues 439-442, 457-459, and 473-476 each bind FAD; these read RYYS, TAV, and GVVT. Residues threonine 537, 599 to 600, 606 to 610, and aspartate 642 each bind NADP(+); these read SR and KVYVQ. Tryptophan 680 provides a ligand contact to FAD.

It belongs to the NADPH--cytochrome P450 reductase family. In the N-terminal section; belongs to the flavodoxin family. This sequence in the C-terminal section; belongs to the flavoprotein pyridine nucleotide cytochrome reductase family. The cofactor is FAD. Requires FMN as cofactor.

It localises to the endoplasmic reticulum membrane. The protein resides in the mitochondrion outer membrane. Its subcellular location is the cell membrane. The enzyme catalyses 2 oxidized [cytochrome P450] + NADPH = 2 reduced [cytochrome P450] + NADP(+) + H(+). Its function is as follows. This enzyme is required for electron transfer from NADP to cytochrome P450 in microsomes. It can also provide electron transfer to heme oxygenase and cytochrome B5. Involved in ergosterol biosynthesis. The polypeptide is NADPH--cytochrome P450 reductase (Candida tropicalis (Yeast)).